The primary structure comprises 844 residues: Lysine-specific histone demethylase 1 homolog 1 (844 aa).

The segment covering 1–18 (MSTETKETRPETKPEDLG) has biased composition (basic and acidic residues). Positions 1–131 (MSTETKETRP…PGPRARKRRR (131 aa)) are disordered. Residues 26-40 (PGEEPLGELIADDVN) show a composition bias toward acidic residues. Polar residues-rich tracts occupy residues 46–62 (ASAT…QSEQ) and 107–118 (DLVTEQQSQNPN). In terms of domain architecture, SWIRM spans 154-255 (GKEVDSEALI…FGLAPVIKEA (102 aa)). FAD contacts are provided by Glu295, Arg297, and Arg303. A Nuclear localization signal motif is present at residues 516 to 523 (LKKGSIEF). FAD is bound at residue Glu679.

It belongs to the flavin monoamine oxidase family. As to quaternary structure, interacts with CZS. Interacts with OTU6/OTLD1. It depends on FAD as a cofactor. In terms of tissue distribution, expressed in the shoot and root apical regions of young seedlings. Expressed in cotyledons and inflorescences.

The protein localises to the nucleus. It is found in the cytoplasm. Probable histone demethylase that reduces the levels of histone H3 'Lys-4' methylation in chromatin of the floral repressor FLOWERING LOCUS C (FLC) and the sporophytically silenced floral repressor FWA. Seems to act in partial redundancy with FLOWERING LOCUS D (FLD) to repress FLC expression. Required for cytosine methylation of FWA. Controls primary seed dormancy by regulating DOG1 and abscisic acid signaling-related genes. In association with OTU6/OTLD1, involved in transcriptional gene repression via histone deubiquitination and demethylation. In Arabidopsis thaliana (Mouse-ear cress), this protein is Lysine-specific histone demethylase 1 homolog 1.